The sequence spans 276 residues: Type II pantothenate kinase (276 aa).

8–15 contributes to the ATP binding site; that stretch reads DAGGTLTK. Glutamate 76 (proton acceptor) is an active-site residue. Residues threonine 105, 127 to 131, phenylalanine 143, and serine 230 each bind ATP; that span reads GGTIM.

Belongs to the type II pantothenate kinase family. Homodimer.

The protein localises to the cytoplasm. It catalyses the reaction (R)-pantothenate + ATP = (R)-4'-phosphopantothenate + ADP + H(+). Its pathway is cofactor biosynthesis; coenzyme A biosynthesis; CoA from (R)-pantothenate: step 1/5. In terms of biological role, catalyzes the phosphorylation of pantothenate (Pan), the first step in CoA biosynthesis. The polypeptide is Type II pantothenate kinase (Bacillus anthracis).